Reading from the N-terminus, the 297-residue chain is NADH-ubiquinone oxidoreductase chain 1 (297 aa).

The next 9 membrane-spanning stretches (helical) occupy residues methionine 1–glutamate 21, proline 34–leucine 54, tryptophan 66–isoleucine 86, leucine 99–glycine 119, valine 139–leucine 159, glycine 170–alanine 190, leucine 206–alanine 228, threonine 235–arginine 257, and leucine 277–phenylalanine 297.

Belongs to the complex I subunit 1 family.

It is found in the mitochondrion inner membrane. It carries out the reaction a ubiquinone + NADH + 5 H(+)(in) = a ubiquinol + NAD(+) + 4 H(+)(out). Functionally, core subunit of the mitochondrial membrane respiratory chain NADH dehydrogenase (Complex I) that is believed to belong to the minimal assembly required for catalysis. Complex I functions in the transfer of electrons from NADH to the respiratory chain. The immediate electron acceptor for the enzyme is believed to be ubiquinone. In Hyaloraphidium curvatum (Lower fungus), this protein is NADH-ubiquinone oxidoreductase chain 1.